We begin with the raw amino-acid sequence, 933 residues long: Dual 3',5'-cyclic-AMP and -GMP phosphodiesterase 11A (933 aa).

The segment at 42 to 125 (HSQGQGALGP…ASQKELRKSF (84 aa)) is disordered. Phosphoserine is present on residues serine 162, serine 163, and serine 239. GAF domains follow at residues 217–370 (DLTS…GIAI) and 402–558 (DLEK…GLGI). Residue serine 424 participates in 3',5'-cyclic GMP binding. Residues 588–912 (SKAEVDKFKA…SKWEELHQKR (325 aa)) form the PDEase domain. Histidine 664 acts as the Proton donor in catalysis. Histidine 668, histidine 704, aspartate 705, and aspartate 816 together coordinate a divalent metal cation.

This sequence belongs to the cyclic nucleotide phosphodiesterase family. It depends on a divalent metal cation as a cofactor. As to expression, isoform 1 is present in prostate, pituitary, heart and liver. It is however not present in testis nor in penis, suggesting that weak inhibition by Tadalafil (Cialis) is not relevant (at protein level). Isoform 2 may be expressed in testis. Isoform 4 is expressed in adrenal cortex.

The protein localises to the cytoplasm. It is found in the cytosol. It catalyses the reaction 3',5'-cyclic GMP + H2O = GMP + H(+). It carries out the reaction 3',5'-cyclic AMP + H2O = AMP + H(+). Its activity is regulated as follows. Inhibited by 3-isobutyl-1-methylxanthine (IBMX), zaprinast and dipyridamole. cGMP acts as an allosteric activator. Weakly inhibited by Sildenafil (Viagra) and Tadalafil (Cialis); however, the fact that the protein is probably absent from testis, suggests that it is not biologically relevant and is not related with erectile dysfunction. Its function is as follows. Plays a role in signal transduction by regulating the intracellular concentration of cyclic nucleotides cAMP and cGMP. Catalyzes the hydrolysis of both cAMP and cGMP to 5'-AMP and 5'-GMP, respectively. The protein is Dual 3',5'-cyclic-AMP and -GMP phosphodiesterase 11A of Homo sapiens (Human).